Here is a 333-residue protein sequence, read N- to C-terminus: L-lactate dehydrogenase B chain (333 aa).

NAD(+) contacts are provided by residues 29-57 and arginine 99; that span reads GQVG…LEDK. Substrate contacts are provided by arginine 106, asparagine 138, and arginine 169. NAD(+) is bound at residue asparagine 138. Histidine 193 acts as the Proton acceptor in catalysis. Threonine 248 is a substrate binding site.

It belongs to the LDH/MDH superfamily. LDH family. As to quaternary structure, homotetramer.

It localises to the cytoplasm. The enzyme catalyses (S)-lactate + NAD(+) = pyruvate + NADH + H(+). Its pathway is fermentation; pyruvate fermentation to lactate; (S)-lactate from pyruvate: step 1/1. In terms of biological role, interconverts simultaneously and stereospecifically pyruvate and lactate with concomitant interconversion of NADH and NAD(+). This chain is L-lactate dehydrogenase B chain (LDHB), found in Anas platyrhynchos (Mallard).